The chain runs to 491 residues: Equilibrative nucleobase transporter 1 (491 aa).

Residues Leu17–Phe37 form a helical membrane-spanning segment. A glycan (N-linked (GlcNAc...) asparagine) is linked at Asn56. 5 helical membrane-spanning segments follow: residues Leu72–Phe92, Leu102–Ser122, Ala123–Thr143, Ser156–Ile176, and Ala188–Met208. Residues Asn220 and Asn229 are each glycosylated (N-linked (GlcNAc...) asparagine). At Ser253 the chain carries Phosphoserine. Thr258 is subject to Phosphothreonine. 6 helical membrane-spanning segments follow: residues Phe279–Thr299, Thr319–Met339, Ser356–Cys376, Ile396–Pro418, Gly427–Ile447, and Phe456–Val476.

Belongs to the SLC43A transporter (TC 2.A.1.44) family. In terms of tissue distribution, widely expressed with highest levels in the liver and lung, followed by the pancreas. Highly expressed in macrophages.

The protein localises to the basolateral cell membrane. It catalyses the reaction adenine(out) = adenine(in). The catalysed reaction is guanine(out) = guanine(in). The enzyme catalyses hypoxanthine(out) = hypoxanthine(in). Adenine transport is strongly inhibited by decynium-22. With respect to regulation, 6-mercaptopurine-transport is inhibited by 6-thioguanine, 6-methylmercaptopurine and decynium-22. Sodium-independent purine-selective nucleobase transporter which mediates the equilibrative transport of extracellular purine nucleobases such as adenine, guanine and hypoxanthine. May regulate fatty acid (FA) transport in adipocytes, acting as a positive regulator of FA efflux and as a negative regulator of FA uptake. Its function is as follows. Sodium-independent purine-selective nucleobase transporter which mediates the equilibrative transport of extracellular purine nucleobase adenine. Mediates the influx and efflux of the purine nucleobase analog drug 6-mercaptopurine across the membrane. This chain is Equilibrative nucleobase transporter 1 (SLC43A3), found in Homo sapiens (Human).